Here is a 219-residue protein sequence, read N- to C-terminus: Thiopurine S-methyltransferase (219 aa).

Residues Trp10, Leu45, Glu66, and Arg123 each coordinate S-adenosyl-L-methionine.

Belongs to the class I-like SAM-binding methyltransferase superfamily. TPMT family.

It is found in the cytoplasm. The catalysed reaction is S-adenosyl-L-methionine + a thiopurine = S-adenosyl-L-homocysteine + a thiopurine S-methylether.. The sequence is that of Thiopurine S-methyltransferase from Marinobacter nauticus (strain ATCC 700491 / DSM 11845 / VT8) (Marinobacter aquaeolei).